A 97-amino-acid polypeptide reads, in one-letter code: Type 1 phosphatases regulator YPI2 (97 aa).

The segment at Met1–Thr97 is disordered. Residues Glu43 to Arg53 are compositionally biased toward basic and acidic residues. Over residues Arg54 to Leu65 the composition is skewed to basic residues.

This sequence belongs to the YPI1 family.

The protein localises to the nucleus. Regulator of type 1 phosphatases which maintains protein phosphatase activity under strict control. The chain is Type 1 phosphatases regulator YPI2 (YPI2) from Vanderwaltozyma polyspora (strain ATCC 22028 / DSM 70294 / BCRC 21397 / CBS 2163 / NBRC 10782 / NRRL Y-8283 / UCD 57-17) (Kluyveromyces polysporus).